A 216-amino-acid chain; its full sequence is Serine/threonine-protein phosphatase 1 (216 aa).

Asp-24, His-26, Asp-53, and Asn-79 together coordinate Mn(2+). His-80 functions as the Proton donor in the catalytic mechanism. His-185 is a binding site for Mn(2+).

The protein belongs to the PPP phosphatase family. PP-1 subfamily. Mn(2+) serves as cofactor.

The enzyme catalyses O-phospho-L-seryl-[protein] + H2O = L-seryl-[protein] + phosphate. It catalyses the reaction O-phospho-L-threonyl-[protein] + H2O = L-threonyl-[protein] + phosphate. Inhibited by cadmium, copper, zinc when added cobalt when added concomitantly with manganese. In terms of biological role, can hydrolyze phosphorylated Ser-, Thr- or Tyr-substrates in vitro. The natural substrate is unknown. The protein is Serine/threonine-protein phosphatase 1 (pphA) of Salmonella typhimurium (strain LT2 / SGSC1412 / ATCC 700720).